The following is a 420-amino-acid chain: Transcriptional adapter 2-beta (420 aa).

The ZZ-type zinc finger occupies 4 to 59; the sequence is LGKKYCVYCLAEVSPLRFRCTECQDIELCPECFSAGAEIGHHRRYHGYQLVDGGRF. 8 residues coordinate Zn(2+): Cys9, Cys12, Cys23, Cys26, Cys32, Cys35, His45, and His49. The region spanning 65 to 118 is the SANT domain; it reads EAEGGWTSREEQLLLDAIEQFGFGNWEDMAAHVGASRTPQEVMEHYVSMYIHGN. The segment at 305–335 is disordered; it reads SAEYEAARHKREKRKENKNLAGSKRGKEDGK.

As to quaternary structure, interacts with GCN5L2, SMARCA4, SMARCE1 and PAX5. Component of the TFTC-HAT complex.

The protein localises to the nucleus. In terms of biological role, coactivates PAX5-dependent transcription together with either SMARCA4 or GCN5L2. The sequence is that of Transcriptional adapter 2-beta (TADA2B) from Homo sapiens (Human).